A 418-amino-acid chain; its full sequence is Arginine deiminase (418 aa).

The Amidino-cysteine intermediate role is filled by C406.

This sequence belongs to the arginine deiminase family.

It localises to the cytoplasm. The catalysed reaction is L-arginine + H2O = L-citrulline + NH4(+). It participates in amino-acid degradation; L-arginine degradation via ADI pathway; carbamoyl phosphate from L-arginine: step 1/2. This Lentilactobacillus hilgardii (Lactobacillus hilgardii) protein is Arginine deiminase.